Reading from the N-terminus, the 272-residue chain is ATP synthase subunit a (272 aa).

5 helical membrane passes run 41-61 (TLNIDSMFFSVVLGLIFLALF), 102-122 (IAPLALTIFVWVFLMNLMDLV), 147-167 (DVNITLSMALGVFILILFYSI), 212-232 (LFGNMYAGELIFILIAGLLPW), and 243-263 (AIFHILIITLQAFIFMVLTIV).

Belongs to the ATPase A chain family. F-type ATPases have 2 components, CF(1) - the catalytic core - and CF(0) - the membrane proton channel. CF(1) has five subunits: alpha(3), beta(3), gamma(1), delta(1), epsilon(1). CF(0) has three main subunits: a(1), b(2) and c(9-12). The alpha and beta chains form an alternating ring which encloses part of the gamma chain. CF(1) is attached to CF(0) by a central stalk formed by the gamma and epsilon chains, while a peripheral stalk is formed by the delta and b chains.

Its subcellular location is the cell inner membrane. Its function is as follows. Key component of the proton channel; it plays a direct role in the translocation of protons across the membrane. The chain is ATP synthase subunit a from Edwardsiella ictaluri (strain 93-146).